The sequence spans 258 residues: MLFLLSPAKSLDYATPAHVAAHTQPLFKRQSAELIAVLKAKSPQEISSLMKLSDALAGLNVARYEAWSPAFTAHNSKQAVLAFNGDVYAGLDAKTLGEAQLAWAQDHLCILSGLYGVLRPLDWMQPYRLEMGTALVTGRGKNLYQFWGAQIADYLNERAATDVSPVIVNLASEEYFKSVSRKVLKARVVTCVFEEWRGDKYKIISFMAKRARGLMVRYAIENRLATVEKLKGFEAEGYCFDASASAVDRLVFRRGQGA.

Belongs to the UPF0246 family.

This chain is UPF0246 protein Pnap_3166, found in Polaromonas naphthalenivorans (strain CJ2).